A 189-amino-acid polypeptide reads, in one-letter code: Mitochondrial FAD-linked sulfhydryl oxidase ERV1 (189 aa).

The 101-residue stretch at 83–183 (DPPDVEQLGR…FDCNFWEKRW (101 aa)) folds into the ERV/ALR sulfhydryl oxidase domain. FAD-binding positions include 88–95 (EQLGRSSW), His-99, and Tyr-128. 2 cysteine pairs are disulfide-bonded: Cys-130-Cys-133 and Cys-159-Cys-176. FAD is bound by residues 159-171 (CEAHNKVNKKLRK) and 182-183 (RW).

As to quaternary structure, homodimer. Interacts with MIA40, forming transient intermolecular disulfide bridges. The cofactor is FAD.

Its subcellular location is the mitochondrion intermembrane space. It catalyses the reaction 2 R'C(R)SH + O2 = R'C(R)S-S(R)CR' + H2O2. FAD-dependent sulfhydryl oxidase that catalyzes disulfide bond formation. Required for the import and folding of small cysteine-containing proteins in the mitochondrial intermembrane space (IMS). Forms a redox cycle with MIA40 that involves a disulfide relay system. Important for maintaining the cysteine residues in MIA40 in an oxidized state. Reduced ERV1 is reoxidized by cytochrome c. Required for the maturation of cytoplasmic, but not of mitochondrial Fe/S proteins. In Saccharomyces cerevisiae (strain ATCC 204508 / S288c) (Baker's yeast), this protein is Mitochondrial FAD-linked sulfhydryl oxidase ERV1 (ERV1).